A 240-amino-acid polypeptide reads, in one-letter code: uncharacterized protein (240 aa).

A compositionally biased stretch (basic residues) spans 1–11 (MGMTPRRKRRG). The disordered stretch occupies residues 1-32 (MGMTPRRKRRGGAVQITRPTGRPRTPTTQTTK). Residues 17–31 (TRPTGRPRTPTTQTT) are compositionally biased toward low complexity. 6 consecutive transmembrane segments (helical) span residues 36–56 (WVVG…VELI), 93–113 (LMAN…AGLS), 115–135 (FVWA…LIGN), 146–166 (IGAS…GLFV), 172–192 (IVIG…AMPV), and 198–218 (GVSW…AYLL).

To M.leprae ML1171.

It localises to the cell membrane. This is an uncharacterized protein from Mycobacterium tuberculosis (strain CDC 1551 / Oshkosh).